The following is a 382-amino-acid chain: D-galactonate dehydratase (382 aa).

D183 serves as a coordination point for Mg(2+). H185 (proton donor) is an active-site residue. Residues E209 and E235 each contribute to the Mg(2+) site. H285 serves as the catalytic Proton acceptor.

This sequence belongs to the mandelate racemase/muconate lactonizing enzyme family. GalD subfamily. Mg(2+) is required as a cofactor.

It catalyses the reaction D-galactonate = 2-dehydro-3-deoxy-D-galactonate + H2O. Its pathway is carbohydrate acid metabolism; D-galactonate degradation; D-glyceraldehyde 3-phosphate and pyruvate from D-galactonate: step 1/3. Its function is as follows. Catalyzes the dehydration of D-galactonate to 2-keto-3-deoxy-D-galactonate. This is D-galactonate dehydratase from Salmonella gallinarum (strain 287/91 / NCTC 13346).